A 209-amino-acid polypeptide reads, in one-letter code: Uracil phosphoribosyltransferase (209 aa).

Residues arginine 79, arginine 104, and 131 to 139 contribute to the 5-phospho-alpha-D-ribose 1-diphosphate site; that span reads DPMLATGGS. Residues isoleucine 194 and 199–201 contribute to the uracil site; that span reads GDA. Aspartate 200 is a 5-phospho-alpha-D-ribose 1-diphosphate binding site.

The protein belongs to the UPRTase family. Mg(2+) is required as a cofactor.

It carries out the reaction UMP + diphosphate = 5-phospho-alpha-D-ribose 1-diphosphate + uracil. Its pathway is pyrimidine metabolism; UMP biosynthesis via salvage pathway; UMP from uracil: step 1/1. Allosterically activated by GTP. In terms of biological role, catalyzes the conversion of uracil and 5-phospho-alpha-D-ribose 1-diphosphate (PRPP) to UMP and diphosphate. This Clostridium beijerinckii (strain ATCC 51743 / NCIMB 8052) (Clostridium acetobutylicum) protein is Uracil phosphoribosyltransferase.